We begin with the raw amino-acid sequence, 376 residues long: N-acetyldiaminopimelate deacetylase (376 aa).

D69 is a catalytic residue. The active-site Proton acceptor is E128.

The protein belongs to the peptidase M20A family. N-acetyldiaminopimelate deacetylase subfamily.

It carries out the reaction N-acetyl-(2S,6S)-2,6-diaminopimelate + H2O = (2S,6S)-2,6-diaminopimelate + acetate. The protein operates within amino-acid biosynthesis; L-lysine biosynthesis via DAP pathway; LL-2,6-diaminopimelate from (S)-tetrahydrodipicolinate (acetylase route): step 3/3. In terms of biological role, catalyzes the conversion of N-acetyl-diaminopimelate to diaminopimelate and acetate. The polypeptide is N-acetyldiaminopimelate deacetylase (Bacillus cereus (strain ATCC 14579 / DSM 31 / CCUG 7414 / JCM 2152 / NBRC 15305 / NCIMB 9373 / NCTC 2599 / NRRL B-3711)).